The sequence spans 357 residues: G-protein coupled receptor 183 (357 aa).

At M1–R27 the chain is on the extracellular side. The N-linked (GlcNAc...) asparagine glycan is linked to N4. The helical transmembrane segment at V28–V53 threads the bilayer. Over Q54 to D73 the chain is Cytoplasmic. A helical membrane pass occupies residues I74–F91. A 7alpha,25-dihydroxycholesterol-binding site is contributed by R83. At D92–R101 the chain is on the extracellular side. Cysteines 100 and 177 form a disulfide. Residues V102 to I123 form a helical membrane-spanning segment. Residues Y108 and Y112 each coordinate 7alpha,25-dihydroxycholesterol. An interaction with G proteins region spans residues S122–V130. Residues D124–K145 are Cytoplasmic-facing. A helical transmembrane segment spans residues G146–L164. Topologically, residues T165–S188 are extracellular. Residues L189–C211 form a helical membrane-spanning segment. Residues Y212–K237 lie on the Cytoplasmic side of the membrane. The helical transmembrane segment at A238–I261 threads the bilayer. Y256 is a 7alpha,25-dihydroxycholesterol binding site. The Extracellular segment spans residues Q262 to Q283. Residues I284 to C308 form a helical membrane-spanning segment. The Cytoplasmic segment spans residues K309–R357. Phosphoserine occurs at positions 324 and 345. Positions E336 to R357 are disordered. Residues E344–R357 show a composition bias toward polar residues.

Belongs to the G-protein coupled receptor 1 family. In terms of assembly, homodimer and heterodimer. Heterodimerizes with CXCR5; leading to modulate the interaction between of CXCL13 and CXCR5. As to expression, expressed in mature B-cells and increases in expression early after activation, before being down-regulated in germinal center B-cells. Expressed in astrocytes. Specifically expressed in CD4(+) dendritic cells but not in CD8(+) dendritic cells. Expressed in monocyte/osteoclasts precursors and mature osteoclasts.

The protein resides in the cell membrane. Functionally, G-protein coupled receptor expressed in lymphocytes that acts as a chemotactic receptor for B-cells, T-cells, splenic dendritic cells, monocytes/macrophages and astrocytes. Receptor for oxysterol 7-alpha,25-dihydroxycholesterol (7-alpha,25-OHC) and other related oxysterols. Mediates cell positioning and movement of a number of cells by binding the 7-alpha,25-OHC ligand that forms a chemotactic gradient. Binding of 7-alpha,25-OHC mediates the correct localization of B-cells during humoral immune responses. Collaborates with CXCR5 to mediate B-cell migration; probably by forming a heterodimer with CXCR5 that affects the interaction between of CXCL13 and CXCR5. Guides B-cell movement along the B-cell zone-T-cell zone boundary and later to interfollicular and outer follicular regions. Its specific expression during B-cell maturation helps position B-cells appropriately for mounting T-dependent antibody responses. Also acts as a chemotactic receptor for some T-cells upon binding to 7-alpha,25-OHC ligand. Promotes follicular helper T (Tfh) cells differentiation by positioning activated T-cells at the follicle-T-zone interface, promoting contact of newly activated CD4 T-cells with activated dendritic cells and exposing them to Tfh-cell-promoting inducible costimulator (ICOS) ligand. Expression in splenic dendritic cells is required for their homeostasis, localization and ability to induce B- and T-cell responses: GPR183 acts as a chemotactic receptor in dendritic cells that mediates the accumulation of CD4(+) dendritic cells in bridging channels. Regulates migration of astrocytes and is involved in communication between astrocytes and macrophages. Promotes osteoclast precursor migration to bone surfaces. Signals constitutively through G(i)-alpha, but not G(s)-alpha or G(q)-alpha. Signals constitutively also via MAPK1/3 (ERK1/2). The protein is G-protein coupled receptor 183 of Mus musculus (Mouse).